The sequence spans 146 residues: Protein E6 (146 aa).

2 zinc fingers span residues 27 to 63 (CVFCKNELTTEELLAFALKELSIVWRHNWPFGVCAPC) and 100 to 136 (CHACSKPLSIQEKEHQVQAYIHFHYIAGQWTGRCCQC).

The protein belongs to the papillomaviridae E6 protein family. Forms homodimers. Interacts with ubiquitin-protein ligase UBE3A/E6-AP; this interaction stimulates UBE3A ubiquitin activity. Interacts with host TP53 and EP300; this interaction inhibits TP53 activity.

It localises to the host cytoplasm. The protein localises to the host nucleus. In terms of biological role, plays a major role in the induction and maintenance of cellular transformation. E6 associates with host UBE3A/E6-AP ubiquitin-protein ligase and modulates its activity. Sequesters tumor suppressor TP53 in the host cytoplasm and modulates its activity by interacting with host EP300 that results in the reduction of TP53 acetylation and activation. In turn, apoptosis induced by DNA damage is inhibited. E6 also protects host keratinocytes from apoptosis by mediating the degradation of host BAK1. May also inhibit host immune response. The protein is Protein E6 of Human papillomavirus type 61.